The following is a 76-amino-acid chain: CLAVATA3/ESR (CLE)-related protein 46 (76 aa).

A signal peptide spans 1 to 26 (MRRHDIIIKLLLLMCLLLSRFVTREC). The interval 53–76 (EEKKWHKHPSGPNPTGNRHPPVKH) is disordered. Hydroxyproline occurs at positions 61 and 64. Pro64 is a glycosylation site (O-linked (Ara...) hydroxyproline).

The protein belongs to the CLV3/ESR signal peptide family. The O-glycosylation (arabinosylation) of the hydroxyproline Pro-64 enhances binding affinity of the CLE46p peptide for its receptor.

The protein localises to the secreted. Its subcellular location is the extracellular space. Its function is as follows. Extracellular signal peptide that regulates cell fate. This is CLAVATA3/ESR (CLE)-related protein 46 from Arabidopsis thaliana (Mouse-ear cress).